The following is a 487-amino-acid chain: Acetyl-coenzyme A carboxylase carboxyl transferase subunit beta, chloroplastic (487 aa).

The region spanning 223 to 487 (LWIQCDNCYG…FFPLKKNEIK (265 aa)) is the CoA carboxyltransferase N-terminal domain. Positions 227, 230, 243, and 246 each coordinate Zn(2+). The segment at 227–246 (CDNCYGLMYKKVKMNVCEQC) adopts a C4-type zinc-finger fold.

The protein belongs to the AccD/PCCB family. As to quaternary structure, acetyl-CoA carboxylase is a heterohexamer composed of biotin carboxyl carrier protein, biotin carboxylase and 2 subunits each of ACCase subunit alpha and ACCase plastid-coded subunit beta (accD). Requires Zn(2+) as cofactor.

The protein localises to the plastid. It is found in the chloroplast stroma. It carries out the reaction N(6)-carboxybiotinyl-L-lysyl-[protein] + acetyl-CoA = N(6)-biotinyl-L-lysyl-[protein] + malonyl-CoA. It participates in lipid metabolism; malonyl-CoA biosynthesis; malonyl-CoA from acetyl-CoA: step 1/1. Its function is as follows. Component of the acetyl coenzyme A carboxylase (ACC) complex. Biotin carboxylase (BC) catalyzes the carboxylation of biotin on its carrier protein (BCCP) and then the CO(2) group is transferred by the transcarboxylase to acetyl-CoA to form malonyl-CoA. This Lepidium virginicum (Virginia pepperweed) protein is Acetyl-coenzyme A carboxylase carboxyl transferase subunit beta, chloroplastic.